We begin with the raw amino-acid sequence, 131 residues long: MFANIGWGEMLVLVMVGLVVLGPERLPGAIRWAASALRQARDYLSGVTSQLREDIGPEFDDLRGHLGELQKLRGMTPRAALTKHLLDGDDSLFTGDFDRPTPKKPDAAGSAGPDATEQIGAGPIPFDSDAT.

Residues 2–22 (FANIGWGEMLVLVMVGLVVLG) form a helical membrane-spanning segment. A disordered region spans residues 90–131 (DSLFTGDFDRPTPKKPDAAGSAGPDATEQIGAGPIPFDSDAT). Over residues 96–106 (DFDRPTPKKPD) the composition is skewed to basic and acidic residues.

Belongs to the TatB family. In terms of assembly, the Tat system comprises two distinct complexes: a TatABC complex, containing multiple copies of TatA, TatB and TatC subunits, and a separate TatA complex, containing only TatA subunits. Substrates initially bind to the TatABC complex, which probably triggers association of the separate TatA complex to form the active translocon.

Its subcellular location is the cell membrane. Functionally, part of the twin-arginine translocation (Tat) system that transports large folded proteins containing a characteristic twin-arginine motif in their signal peptide across membranes. Together with TatC, TatB is part of a receptor directly interacting with Tat signal peptides. TatB may form an oligomeric binding site that transiently accommodates folded Tat precursor proteins before their translocation. The chain is Sec-independent protein translocase protein TatB from Mycobacterium bovis (strain ATCC BAA-935 / AF2122/97).